The primary structure comprises 565 residues: NAD-dependent malic enzyme (565 aa).

The Proton donor role is filled by Tyr-104. Arg-157 is an NAD(+) binding site. Lys-175 serves as the catalytic Proton acceptor. Residues Glu-246, Asp-247, and Asp-270 each coordinate a divalent metal cation. Asp-270 and Asn-418 together coordinate NAD(+).

This sequence belongs to the malic enzymes family. As to quaternary structure, homotetramer. It depends on Mg(2+) as a cofactor. Mn(2+) serves as cofactor.

The catalysed reaction is (S)-malate + NAD(+) = pyruvate + CO2 + NADH. The enzyme catalyses oxaloacetate + H(+) = pyruvate + CO2. This chain is NAD-dependent malic enzyme, found in Pectobacterium atrosepticum (strain SCRI 1043 / ATCC BAA-672) (Erwinia carotovora subsp. atroseptica).